The following is a 610-amino-acid chain: Zinc metalloproteinase-disintegrin-like brevilysin H6 (610 aa).

A signal peptide spans 1-20; sequence MIQVLLVTICLAAFPYQGSS. Residues 21–191 constitute a propeptide that is removed on maturation; sequence IILESGNVND…ASQLNLTPEQ (171 aa). Residue Q192 is modified to Pyrrolidone carboxylic acid. In terms of domain architecture, Peptidase M12B spans 198 to 394; the sequence is RFVELVLVAD…HNPECIVNEP (197 aa). Ca(2+) contacts are provided by E201 and D285. 4 cysteine pairs are disulfide-bonded: C309–C389, C349–C373, C351–C356, and C373–C378. H334 contributes to the Zn(2+) binding site. The active site involves E335. Zn(2+)-binding residues include H338 and H344. An N-linked (GlcNAc...) asparagine glycan is attached at N372. The Ca(2+) site is built by C389, N392, V404, N407, L409, E411, E414, and D417. Residues 402–488 form the Disintegrin domain; the sequence is PPVCGNELLE…ECPADVFHKN (87 aa). 22 disulfides stabilise this stretch: C405-C424, C405-C434, C416-C429, C416-C434, C418-C424, C428-C451, C442-C448, C447-C473, C460-C480, C467-C492, C467-C499, C492-C504, C499-C504, C511-C526, C511-C561, C526-C572, C539-C549, C549-C556, C556-C598, C561-C572, C592-C603, and C598-C603. The short motif at 466 to 468 is the D/ECD-tripeptide element; it reads ECD. Ca(2+)-binding residues include D468, P469, E471, D483, and V484.

The protein belongs to the venom metalloproteinase (M12B) family. P-III subfamily. P-IIIb sub-subfamily. Monomer. The cofactor is Zn(2+). Post-translationally, in the absence of calcium ions, is autocatalytically degraded giving 29 (p29K) and 45 kDa (p45K) fragments. In presence of calcium ions, the p45K is not detected. As to expression, expressed by the venom gland.

Its subcellular location is the secreted. With respect to regulation, inhibited by chelating agents. Calcium ions enhance its activity, they also suppress autoproteolysis, and contribute to the stability of the enzyme against pH, heating, urea and cysteine. In terms of biological role, shows weak hemorrhagic activity. Rapidly degrades the alpha-chain of fibrinogen (FGA). This chain is Zinc metalloproteinase-disintegrin-like brevilysin H6, found in Gloydius brevicauda (Korean slamosa snake).